Here is a 315-residue protein sequence, read N- to C-terminus: tRNA dimethylallyltransferase (315 aa).

13–20 provides a ligand contact to ATP; that stretch reads GPTASGKT. 15–20 contacts substrate; the sequence is TASGKT. Interaction with substrate tRNA regions lie at residues 38 to 41, 162 to 166, and 245 to 250; these read DSAL, QRIQR, and RCVGYR.

It belongs to the IPP transferase family. Monomer. Mg(2+) serves as cofactor.

The catalysed reaction is adenosine(37) in tRNA + dimethylallyl diphosphate = N(6)-dimethylallyladenosine(37) in tRNA + diphosphate. Functionally, catalyzes the transfer of a dimethylallyl group onto the adenine at position 37 in tRNAs that read codons beginning with uridine, leading to the formation of N6-(dimethylallyl)adenosine (i(6)A). The protein is tRNA dimethylallyltransferase of Methylobacillus flagellatus (strain ATCC 51484 / DSM 6875 / VKM B-1610 / KT).